The primary structure comprises 57 residues: Toxin GhoT (57 aa).

The next 2 membrane-spanning stretches (helical) occupy residues 7–27 (ILIF…FISH) and 37–57 (AFLV…FSLF).

It belongs to the GhoT/OrtT toxin family.

It localises to the cell inner membrane. Its function is as follows. Toxic component of a type V toxin-antitoxin (TA) system. Causes membrane damage when induced by MqsR, slowing cell growth and leading to the formation of dormant persister cells; involved with GhoS, its antitoxin, in reducing cell growth during antibacterial stress. Its toxic effects are neutralized by GhoS, which digests ghoT transcripts in a sequence-specific manner. The sequence is that of Toxin GhoT from Escherichia coli O157:H7.